The primary structure comprises 330 residues: 3',5'-cyclic-nucleotide phosphodiesterase (330 aa).

Positions 1-22 (MFKNKLAVLFTCLSVFSFSAQS) are cleaved as a signal peptide.

This sequence belongs to the cyclic nucleotide phosphodiesterase class-II family.

It localises to the periplasm. The catalysed reaction is a nucleoside 3',5'-cyclic phosphate + H2O = a nucleoside 5'-phosphate + H(+). Seems to allow the organism to grow on cAMP. The chain is 3',5'-cyclic-nucleotide phosphodiesterase (cpdP) from Aliivibrio fischeri (Vibrio fischeri).